A 156-amino-acid polypeptide reads, in one-letter code: Calglandulin (156 aa).

EF-hand domains follow at residues 8-43, 44-79, 82-117, and 118-153; these read EQIT…IGIN, PTKR…YHEK, NQDE…AGEP, and LNEH…ESFK. Positions 131, 133, 135, 137, and 142 each coordinate Ca(2+).

This sequence belongs to the calmodulin family. Calglandulin subfamily. As to expression, expressed by the venom gland.

The protein resides in the cytoplasm. Its function is as follows. May be involved in the cellular control mechanism of the secretion of toxins from the gland into the venom. The protein is Calglandulin of Tropidechis carinatus (Australian rough-scaled snake).